Here is a 130-residue protein sequence, read N- to C-terminus: Small ribosomal subunit protein uS8 (130 aa).

Belongs to the universal ribosomal protein uS8 family. As to quaternary structure, part of the 30S ribosomal subunit. Contacts proteins S5 and S12.

Its function is as follows. One of the primary rRNA binding proteins, it binds directly to 16S rRNA central domain where it helps coordinate assembly of the platform of the 30S subunit. This chain is Small ribosomal subunit protein uS8, found in Salmonella arizonae (strain ATCC BAA-731 / CDC346-86 / RSK2980).